A 324-amino-acid chain; its full sequence is NADH-ubiquinone oxidoreductase chain 1 (324 aa).

8 helical membrane-spanning segments follow: residues Phe3–Phe23, Ile77–Val97, Leu104–Gly124, Leu150–Phe170, Ile174–Leu194, Leu226–Phe246, Asp250–Ala270, and Tyr297–Phe317.

The protein belongs to the complex I subunit 1 family.

It localises to the mitochondrion inner membrane. It catalyses the reaction a ubiquinone + NADH + 5 H(+)(in) = a ubiquinol + NAD(+) + 4 H(+)(out). Functionally, core subunit of the mitochondrial membrane respiratory chain NADH dehydrogenase (Complex I) that is believed to belong to the minimal assembly required for catalysis. Complex I functions in the transfer of electrons from NADH to the respiratory chain. The immediate electron acceptor for the enzyme is believed to be ubiquinone. This is NADH-ubiquinone oxidoreductase chain 1 (mt:ND1) from Drosophila yakuba (Fruit fly).